Consider the following 474-residue polypeptide: L-lactate permease (474 aa).

Transmembrane regions (helical) follow at residues 4 to 21 (AILA…LAVF), 28 to 48 (ACFI…HFSI), 63 to 85 (FWPI…ASGG), 105 to 127 (LILA…AVAI), 142 to 164 (AALI…LPVT), 177 to 199 (LSVI…LVSL), 209 to 231 (GVFG…VSNY), 238 to 255 (SIIG…FVNL), 281 to 303 (FILV…QLLA), 324 to 346 (WLTS…QGMS), and 387 to 409 (IAVS…IGTL).

This sequence belongs to the lactate permease family.

It localises to the cell membrane. Its function is as follows. Plays a role in L-lactate utilization. This chain is L-lactate permease (lctP), found in Streptococcus iniae (Streptococcus shiloi).